The following is a 106-amino-acid chain: UPF0145 protein PputGB1_2909 (106 aa).

It belongs to the UPF0145 family.

This chain is UPF0145 protein PputGB1_2909, found in Pseudomonas putida (strain GB-1).